We begin with the raw amino-acid sequence, 761 residues long: Prolyl oligopeptidase A (761 aa).

Catalysis depends on charge relay system residues Ser606, Asp690, and His726.

This sequence belongs to the peptidase S9A family. As to quaternary structure, monomer.

The catalysed reaction is Hydrolysis of Pro-|-Xaa &gt;&gt; Ala-|-Xaa in oligopeptides.. In terms of biological role, housekeeping prolyl oligopeptidase (POP) that behaves like a conventional POP by cleaving peptide bonds on the C-terminal side of prolyl residues within peptides that are up to approximately 30 amino acids long. This Amanita bisporigera (Destroying angel) protein is Prolyl oligopeptidase A.